The sequence spans 273 residues: Zinc finger protein 32 (273 aa).

3 C2H2-type zinc fingers span residues 77–99 (YECQECGKSFRQKGSLTLHERIH), 105–127 (FECTHCGKSFRAKGNLVTHQRIH), and 133–155 (YQCKECGKSFSQRGSLAVHERLH). Cys79, Cys82, His95, His99, Cys107, Cys110, His123, His127, Ser141, Gln144, Gly157, Tyr161, Phe198, Lys201, Leu214, Ala218, Cys247, Cys250, His263, and Cys267 together coordinate Zn(2+). C2H2-type zinc fingers lie at residues 161–183 (YECAICQRSFRNQSNLAVHRRVH) and 189–211 (YRCDQCGKAFSQKGSLIVHIRVH). Residues 217–239 (YACTQCRKSFHTRGNCILHGKIH) form a C2H2-type 6 zinc finger. A CCHC-type zinc finger spans residues 245–267 (YLCGQCGKSFTQRGSLAVHQRSC).

The protein belongs to the krueppel C2H2-type zinc-finger protein family.

The protein resides in the nucleus. Its function is as follows. May be involved in transcriptional regulation. The polypeptide is Zinc finger protein 32 (ZNF32) (Homo sapiens (Human)).